The following is a 210-amino-acid chain: Ribonuclease HII (210 aa).

In terms of domain architecture, RNase H type-2 spans 17 to 206 (DIICGVDEAG…VRALLGGVTP (190 aa)). A divalent metal cation-binding residues include Asp-23, Glu-24, and Asp-115.

The protein belongs to the RNase HII family. The cofactor is Mn(2+). Requires Mg(2+) as cofactor.

Its subcellular location is the cytoplasm. The enzyme catalyses Endonucleolytic cleavage to 5'-phosphomonoester.. In terms of biological role, endonuclease that specifically degrades the RNA of RNA-DNA hybrids. The protein is Ribonuclease HII of Janthinobacterium sp. (strain Marseille) (Minibacterium massiliensis).